Here is a 289-residue protein sequence, read N- to C-terminus: CCR4-associated factor 16 (289 aa).

One can recognise an ABC transporter domain in the interval 7-249; that stretch reads IEVRNLTYKF…SEVVNAKVNG (243 aa). Residue 41–48 participates in ATP binding; the sequence is GANGAGKS.

This sequence belongs to the ABC transporter superfamily. Interacts with CCR4 and SSN2.

It is found in the cytoplasm. The protein localises to the nucleus. The protein is CCR4-associated factor 16 (CAF16) of Saccharomyces cerevisiae (strain ATCC 204508 / S288c) (Baker's yeast).